The primary structure comprises 232 residues: MAKIAKRVSKTREGIDPNKAYALGEALKLLKDRSSVKFDETVEVAMNLGVDPRHADQMVRGVVNLPNGTGRSVRVAVFARGDKAEEAKAAGADIVGAEDLVDIVQKGTIDFDRCIATPDMMPLVGRLGKVLGPRGMMPNPKVGTVTTDVAAAVKASKGGAVEFRVEKAGIVHAGVGKVSFDVKALEENIRAFADAVTKAKPAGAKGNYVKKVSVTSTMGPGLKLDVSTLAAS.

The protein belongs to the universal ribosomal protein uL1 family. Part of the 50S ribosomal subunit.

In terms of biological role, binds directly to 23S rRNA. The L1 stalk is quite mobile in the ribosome, and is involved in E site tRNA release. Functionally, protein L1 is also a translational repressor protein, it controls the translation of the L11 operon by binding to its mRNA. In Mesorhizobium japonicum (strain LMG 29417 / CECT 9101 / MAFF 303099) (Mesorhizobium loti (strain MAFF 303099)), this protein is Large ribosomal subunit protein uL1.